A 510-amino-acid polypeptide reads, in one-letter code: RNA-splicing ligase RtcB homolog (510 aa).

Residues Asp-124, Cys-127, His-232, His-264, and His-358 each contribute to the Mn(2+) site. 231–235 contributes to the GMP binding site; it reads NHYAE. Residues 358 to 359, 407 to 410, Ser-414, 433 to 436, and Lys-509 contribute to the GMP site; these read HN, GGTM, and HGAG. His-433 acts as the GMP-histidine intermediate in catalysis.

This sequence belongs to the RtcB family. As to quaternary structure, catalytic component of the tRNA-splicing ligase complex. Mn(2+) is required as a cofactor.

The catalysed reaction is a 3'-end 3'-phospho-ribonucleotide-RNA + a 5'-end dephospho-ribonucleoside-RNA + GTP = a ribonucleotidyl-ribonucleotide-RNA + GMP + diphosphate. The enzyme catalyses a 3'-end 2',3'-cyclophospho-ribonucleotide-RNA + a 5'-end dephospho-ribonucleoside-RNA + GTP + H2O = a ribonucleotidyl-ribonucleotide-RNA + GMP + diphosphate + H(+). Functionally, catalytic subunit of the tRNA-splicing ligase complex that acts by directly joining spliced tRNA halves to mature-sized tRNAs by incorporating the precursor-derived splice junction phosphate into the mature tRNA as a canonical 3',5'-phosphodiester. May act as an RNA ligase with broad substrate specificity, and may function toward other RNAs. The sequence is that of RNA-splicing ligase RtcB homolog from Trichoplax adhaerens (Trichoplax reptans).